A 509-amino-acid polypeptide reads, in one-letter code: Maturase K (509 aa).

It belongs to the intron maturase 2 family. MatK subfamily.

Its subcellular location is the plastid. It localises to the chloroplast. In terms of biological role, usually encoded in the trnK tRNA gene intron. Probably assists in splicing its own and other chloroplast group II introns. In Clematis vitalba (Evergreen clematis), this protein is Maturase K.